The chain runs to 395 residues: Vomeronasal type-1 receptor 2 (395 aa).

Residues Leu-12–Val-32 traverse the membrane as a helical segment. At Ser-33–Leu-51 the chain is on the extracellular side. A helical transmembrane segment spans residues Val-52–Phe-72. The Cytoplasmic segment spans residues Leu-73–Thr-93. Residues Leu-94 to Leu-114 form a helical membrane-spanning segment. Over Tyr-115–Arg-170 the chain is Extracellular. Residues Val-171–Ile-191 traverse the membrane as a helical segment. At Asn-192–Tyr-208 the chain is on the cytoplasmic side. A helical transmembrane segment spans residues Ile-209–Ile-229. Residues Tyr-230–Ser-267 are Extracellular-facing. Asn-239 carries N-linked (GlcNAc...) asparagine glycosylation. A helical membrane pass occupies residues Phe-268–Leu-288. The Cytoplasmic portion of the chain corresponds to Tyr-289 to Ser-316. Residues Ile-317 to Tyr-337 traverse the membrane as a helical segment. Topologically, residues Leu-338–Trp-346 are extracellular. A glycan (N-linked (GlcNAc...) asparagine) is linked at Asn-343. Residues Trp-347–Leu-367 form a helical membrane-spanning segment. Topologically, residues Met-368 to Met-395 are cytoplasmic.

Belongs to the G-protein coupled receptor 1 family.

It localises to the cell membrane. In terms of biological role, putative pheromone receptor. In Homo sapiens (Human), this protein is Vomeronasal type-1 receptor 2 (VN1R2).